A 284-amino-acid polypeptide reads, in one-letter code: BES1/BZR1 homolog protein 3 (284 aa).

2 disordered regions span residues 1-21 (MTSG…RRER) and 85-116 (GSTS…PSPT). The tract at residues 6-88 (RTPTWKEREN…RMDLMNGSTS (83 aa)) is required for DNA-binding. The span at 85–97 (GSTSASPCSSYQH) shows a compositional bias: polar residues. A compositionally biased stretch (low complexity) spans 98 to 114 (SPRASYNPSPSSSSFPS). Position 153 is a phosphothreonine (threonine 153).

The protein belongs to the BZR/LAT61 family. In terms of processing, phosphorylated. Phosphorylation increases protein degradation.

This chain is BES1/BZR1 homolog protein 3 (BEH3), found in Arabidopsis thaliana (Mouse-ear cress).